We begin with the raw amino-acid sequence, 311 residues long: Malate dehydrogenase (311 aa).

NAD(+)-binding positions include 7–13 and Asp34; that span reads GAAGGIG. Substrate contacts are provided by Arg81 and Arg87. Residues Asn94 and 117 to 119 contribute to the NAD(+) site; that span reads ITN. Substrate-binding residues include Asn119 and Arg153. His177 serves as the catalytic Proton acceptor. NAD(+) is bound at residue Met227.

This sequence belongs to the LDH/MDH superfamily. MDH type 1 family. As to quaternary structure, homodimer.

It catalyses the reaction (S)-malate + NAD(+) = oxaloacetate + NADH + H(+). In terms of biological role, catalyzes the reversible oxidation of malate to oxaloacetate. The sequence is that of Malate dehydrogenase from Shewanella sediminis (strain HAW-EB3).